The primary structure comprises 505 residues: Lysine--tRNA ligase (505 aa).

The Mg(2+) site is built by Glu-415 and Glu-422.

This sequence belongs to the class-II aminoacyl-tRNA synthetase family. In terms of assembly, homodimer. Mg(2+) is required as a cofactor.

The protein localises to the cytoplasm. It carries out the reaction tRNA(Lys) + L-lysine + ATP = L-lysyl-tRNA(Lys) + AMP + diphosphate. The protein is Lysine--tRNA ligase of Shigella boydii serotype 4 (strain Sb227).